Reading from the N-terminus, the 326-residue chain is Organic solute transporter subunit alpha (326 aa).

Over 1-28 the chain is Extracellular; sequence METSNFTLFDPRCRAEAPFAIDAIKQLD. Asn-5 is a glycosylation site (N-linked (GlcNAc...) asparagine). The helical transmembrane segment at 29–49 threads the bilayer; the sequence is IFGKVLYTVLTLMATASMLVF. The Cytoplasmic segment spans residues 50 to 67; the sequence is IEECIYIYKKVPAHKKST. Residues 68–88 form a helical membrane-spanning segment; sequence IIWVTGVAPVMAIMSCLGMWV. Over 89-99 the chain is Extracellular; it reads PRATMFTDMTS. The chain crosses the membrane as a helical span at residues 100-120; that stretch reads ATYFAIVVFKFLILMIEEVGG. Residues 121-161 are Cytoplasmic-facing; the sequence is DNAFLRRCEKQTFKISTGPCCCCCPCLPNVPITRRSLFILK. A helical membrane pass occupies residues 162–182; the sequence is LGSYQFALMKLVLTIFSIVLW. Topologically, residues 183-198 are extracellular; it reads TNGSFSLTNVSASGAA. N-linked (GlcNAc...) asparagine glycans are attached at residues Asn-184 and Asn-191. Residues 199 to 219 traverse the membrane as a helical segment; the sequence is IWINSFIGVLTIIALWPVAIM. The Cytoplasmic portion of the chain corresponds to 220–237; that stretch reads FMHVREALRTLKIVPKYA. A helical transmembrane segment spans residues 238–258; the sequence is MYQLVLILSQLQTAIINILAL. Asn-259 carries N-linked (GlcNAc...) asparagine glycosylation. The Extracellular segment spans residues 259–275; it reads NGTIACSPPYSSQARGY. A helical membrane pass occupies residues 276–296; the sequence is MMSQQLLIVEMFIITLVTRVL. Residues 297 to 326 lie on the Cytoplasmic side of the membrane; it reads YRRQYEPIPEPDDVEEKKTVLSSKKAIDVA.

It belongs to the OST-alpha family. As to quaternary structure, interacts with slc51b. The Ost-alpha/Ost-beta complex is a heterodimer composed of alpha (slc51a) and beta (slc51b) subunit.

It is found in the cell membrane. It localises to the endoplasmic reticulum membrane. It carries out the reaction taurocholate(out) = taurocholate(in). The enzyme catalyses prostaglandin E2(out) = prostaglandin E2(in). It catalyses the reaction estrone 3-sulfate(out) = estrone 3-sulfate(in). The catalysed reaction is dehydroepiandrosterone 3-sulfate(out) = dehydroepiandrosterone 3-sulfate(in). It carries out the reaction tauroursodeoxycholate(out) = tauroursodeoxycholate(in). The enzyme catalyses glycoursodeoxycholate(out) = glycoursodeoxycholate(in). It catalyses the reaction glycocholate(out) = glycocholate(in). The catalysed reaction is taurochenodeoxycholate(out) = taurochenodeoxycholate(in). It carries out the reaction glycochenodeoxycholate(out) = glycochenodeoxycholate(in). The enzyme catalyses taurodeoxycholate(out) = taurodeoxycholate(in). It catalyses the reaction glycodeoxycholate(out) = glycodeoxycholate(in). Functionally, essential component of the Ost-alpha/Ost-beta complex, a heterodimer that acts as the intestinal basolateral transporter responsible for the translocation of bile acids (such as taurocholate), steroids (such as estrone sulfate), and eicosanoids (such as prostaglandin E2). This chain is Organic solute transporter subunit alpha (slc51a), found in Danio rerio (Zebrafish).